The primary structure comprises 231 residues: Deoxyribose-phosphate aldolase (231 aa).

D97 acts as the Proton donor/acceptor in catalysis. K162 (schiff-base intermediate with acetaldehyde) is an active-site residue. K191 serves as the catalytic Proton donor/acceptor.

The protein belongs to the DeoC/FbaB aldolase family. DeoC type 1 subfamily.

The protein resides in the cytoplasm. The enzyme catalyses 2-deoxy-D-ribose 5-phosphate = D-glyceraldehyde 3-phosphate + acetaldehyde. It functions in the pathway carbohydrate degradation; 2-deoxy-D-ribose 1-phosphate degradation; D-glyceraldehyde 3-phosphate and acetaldehyde from 2-deoxy-alpha-D-ribose 1-phosphate: step 2/2. Its function is as follows. Catalyzes a reversible aldol reaction between acetaldehyde and D-glyceraldehyde 3-phosphate to generate 2-deoxy-D-ribose 5-phosphate. The sequence is that of Deoxyribose-phosphate aldolase from Caldanaerobacter subterraneus subsp. tengcongensis (strain DSM 15242 / JCM 11007 / NBRC 100824 / MB4) (Thermoanaerobacter tengcongensis).